Reading from the N-terminus, the 41-residue chain is Large ribosomal subunit protein bL36A (41 aa).

This sequence belongs to the bacterial ribosomal protein bL36 family.

The chain is Large ribosomal subunit protein bL36A from Aeromonas salmonicida (strain A449).